The sequence spans 327 residues: Flap endonuclease 1 (327 aa).

Positions 1 to 100 are N-domain; sequence MGNADLRQLA…DEIADRREQR (100 aa). Mg(2+)-binding residues include Asp-28, Asp-82, Glu-154, Glu-156, Asp-176, Asp-178, and Asp-226. Residues 118-247 form an I-domain region; it reads EAARLDARTQ…TALDAIGEHG (130 aa). Residues 319–327 are interaction with PCNA; sequence AQTGLDRWT.

It belongs to the XPG/RAD2 endonuclease family. FEN1 subfamily. Interacts with PCNA. PCNA stimulates the nuclease activity without altering cleavage specificity. Mg(2+) serves as cofactor.

In terms of biological role, structure-specific nuclease with 5'-flap endonuclease and 5'-3' exonuclease activities involved in DNA replication and repair. During DNA replication, cleaves the 5'-overhanging flap structure that is generated by displacement synthesis when DNA polymerase encounters the 5'-end of a downstream Okazaki fragment. Binds the unpaired 3'-DNA end and kinks the DNA to facilitate 5' cleavage specificity. Cleaves one nucleotide into the double-stranded DNA from the junction in flap DNA, leaving a nick for ligation. Also involved in the base excision repair (BER) pathway. Acts as a genome stabilization factor that prevents flaps from equilibrating into structures that lead to duplications and deletions. Also possesses 5'-3' exonuclease activity on nicked or gapped double-stranded DNA. This Halobacterium salinarum (strain ATCC 29341 / DSM 671 / R1) protein is Flap endonuclease 1.